A 681-amino-acid polypeptide reads, in one-letter code: MVSEKIKQEVEKLRKEIEYHNYRYYVLAQPVISDEEYDKLMKRLMELEEKYPELKTPDSPTQRVGGQLIEGFETVEHSEPMLSLDNTYNENEIRNFHERIRKVVRDVQYVAELKIDGVSIALRYENGLLVRAITRGDGLRGDDVTANVKTVKSIPLRLPEPLTIEVRGEIFMPVQYFEEFNRQREEEGLLPFANPRNATAGTLHLLDPSQVAQRKLDSFMYYIVKPQQYDLKTQWDALKFLEKLHFKVNPHSKLLSSIEEVIDYWKEWTEKRKKLEYWIDGVVVKVNDFEQQNELGWTAKSPRWAIAFKFPAQQVRTKVLNITFQVGRTGTITPVAEFEPVELEGSIVKRASLHNFDYIKENDIRVGDYVFIEKAGGIIPQISYVLKELRDGDEIETVPPEKCPECGGPVGKESGEYVAYKCLNPHCPAKLKRHIEVFVSRQAMDIQGLGPKIISKIVDAGLVKDIADLYYLNIFDLAQISGLGPKMISNILSEIEKSKQNPIEKLLVGLGIPGVGEKIAKVLAKKYKSMEELSKADIKELSEIEGIGEDIAKNIVEYFNSPKTKEILEKLRKAGVNLESAETTTSNILDGLTFCVTGTLENFSREEIKRFIESLGGHFTDNLTKKTDYLLVGTNPGSKLEKAKKFGVKVLNEQEFLEMLEKKGVELKESWKKPKPKDTLF.

NAD(+) is bound by residues 34–38 (DEEYD), 83–84 (SL), and E112. The N6-AMP-lysine intermediate role is filled by K114. R135, E169, K285, and K309 together coordinate NAD(+). 4 residues coordinate Zn(2+): C403, C406, C422, and C427. A BRCT domain is found at 584–673 (TTSNILDGLT…GVELKESWKK (90 aa)).

This sequence belongs to the NAD-dependent DNA ligase family. LigA subfamily. The cofactor is Mg(2+). Mn(2+) is required as a cofactor.

It carries out the reaction NAD(+) + (deoxyribonucleotide)n-3'-hydroxyl + 5'-phospho-(deoxyribonucleotide)m = (deoxyribonucleotide)n+m + AMP + beta-nicotinamide D-nucleotide.. Its function is as follows. DNA ligase that catalyzes the formation of phosphodiester linkages between 5'-phosphoryl and 3'-hydroxyl groups in double-stranded DNA using NAD as a coenzyme and as the energy source for the reaction. It is essential for DNA replication and repair of damaged DNA. The sequence is that of DNA ligase from Fervidobacterium nodosum (strain ATCC 35602 / DSM 5306 / Rt17-B1).